Reading from the N-terminus, the 486-residue chain is UDP-N-acetylmuramate--L-alanine ligase (486 aa).

129-135 (GTHGKTT) is an ATP binding site.

The protein belongs to the MurCDEF family.

The protein resides in the cytoplasm. It catalyses the reaction UDP-N-acetyl-alpha-D-muramate + L-alanine + ATP = UDP-N-acetyl-alpha-D-muramoyl-L-alanine + ADP + phosphate + H(+). It participates in cell wall biogenesis; peptidoglycan biosynthesis. Cell wall formation. This is UDP-N-acetylmuramate--L-alanine ligase from Vibrio cholerae serotype O1 (strain ATCC 39315 / El Tor Inaba N16961).